The primary structure comprises 99 residues: MAKESMKAREIKRAKLVAKYAEKRAALKQIVRTGDPAEAFEAAQKLQELPKNSNPIRMHNRCKLTGRPKGYIRQFGVSRIQFREMASNGLIPGVKKASW.

This sequence belongs to the universal ribosomal protein uS14 family. In terms of assembly, part of the 30S ribosomal subunit. Contacts proteins S3 and S10.

Binds 16S rRNA, required for the assembly of 30S particles and may also be responsible for determining the conformation of the 16S rRNA at the A site. In Bacteroides fragilis (strain ATCC 25285 / DSM 2151 / CCUG 4856 / JCM 11019 / LMG 10263 / NCTC 9343 / Onslow / VPI 2553 / EN-2), this protein is Small ribosomal subunit protein uS14.